The chain runs to 244 residues: Heat stress transcription factor B-3 (244 aa).

The DNA-binding element occupies Pro38–Ser132. Residues Thr173–Arg218 form a hydrophobic repeat HR-A/B region. Residues Lys202–Lys208 carry the Nuclear localization signal motif. Residues Arg216–Glu244 are disordered. Residues Glu220–Glu234 show a composition bias toward acidic residues. A Nuclear export signal motif is present at residues Leu236 to Leu243.

This sequence belongs to the HSF family. Class B subfamily. In terms of assembly, homotrimer. Exhibits temperature-dependent phosphorylation.

Its subcellular location is the cytoplasm. It is found in the nucleus. Functionally, transcriptional regulator that specifically binds DNA sequence 5'-AGAAnnTTCT-3' known as heat shock promoter elements (HSE). This chain is Heat stress transcription factor B-3 (HSFB3), found in Arabidopsis thaliana (Mouse-ear cress).